Consider the following 691-residue polypeptide: Probable E3 ubiquitin-protein ligase RHG1A (691 aa).

Disordered stretches follow at residues 71-91, 151-235, 316-336, 349-373, and 395-501; these read SLGE…NEQR, GPGT…PRGM, SFVV…GSRT, VGGT…SRSI, and QSSR…MHNR. Basic and acidic residues predominate over residues 80 to 91; the sequence is TKDEASSHNEQR. Composition is skewed to polar residues over residues 204-213 and 317-328; these read GESSSWTPGS and FVVSRNPNSTPV. A compositionally biased stretch (basic and acidic residues) spans 361–370; it reads RNLHLDETRS. Residues 395–406 are compositionally biased toward polar residues; it reads QSSRNVTNGNLN. Residues 407 to 419 show a composition bias toward low complexity; that stretch reads SASSVSRTGSTTS. Residues 429-440 are compositionally biased toward polar residues; that stretch reads NLAWTSYQNSPH. Residues 454 to 465 are compositionally biased toward low complexity; that stretch reads RSLLSSLAADAT. Residues 637 to 678 form an RING-type; atypical zinc finger; sequence CCVCQEEYTEGEDMGTLECGHEFHSQCIKEWLKQKNLCPICK.

As to expression, expressed in stems, flowers, green siliques, cauline leaves, seeds and roots.

It carries out the reaction S-ubiquitinyl-[E2 ubiquitin-conjugating enzyme]-L-cysteine + [acceptor protein]-L-lysine = [E2 ubiquitin-conjugating enzyme]-L-cysteine + N(6)-ubiquitinyl-[acceptor protein]-L-lysine.. It functions in the pathway protein modification; protein ubiquitination. Probable E3 ubiquitin-protein ligase that may possess E3 ubiquitin ligase activity in vitro. This Arabidopsis thaliana (Mouse-ear cress) protein is Probable E3 ubiquitin-protein ligase RHG1A.